The sequence spans 98 residues: Small ribosomal subunit protein bS20 (98 aa).

It belongs to the bacterial ribosomal protein bS20 family.

In terms of biological role, binds directly to 16S ribosomal RNA. The chain is Small ribosomal subunit protein bS20 from Synechococcus elongatus (strain ATCC 33912 / PCC 7942 / FACHB-805) (Anacystis nidulans R2).